Reading from the N-terminus, the 62-residue chain is Venom peptide SjAPI-2 (62 aa).

5 cysteine pairs are disulfide-bonded: Cys-4–Cys-40, Cys-14–Cys-36, Cys-18–Cys-32, Cys-22–Cys-60, and Cys-42–Cys-54. The region spanning 4 to 60 is the TIL domain; sequence CRISGEVFTWCGTTCPLTCENFRNPPKHCPQGCFVGCMCRRGLVRHRNGRCVRPPRC.

The protein belongs to the serine protease inhibitor-like (TIL domain-containing) family. As to expression, expressed by the venom gland.

The protein resides in the secreted. Serine protease inhibitor. The protein is Venom peptide SjAPI-2 of Scorpiops jendeki (Scorpion).